Consider the following 300-residue polypeptide: Phospholipase A1 (300 aa).

A disulfide bond links cysteine 4 and cysteine 87. Catalysis depends on serine 137, which acts as the Nucleophile. Aspartate 165 functions as the Charge relay system in the catalytic mechanism. 2 disulfides stabilise this stretch: cysteine 176/cysteine 181 and cysteine 219/cysteine 227. Histidine 229 acts as the Charge relay system in catalysis. Cystine bridges form between cysteine 244–cysteine 268, cysteine 245–cysteine 293, and cysteine 261–cysteine 266.

It belongs to the AB hydrolase superfamily. Lipase family. Expressed by the venom gland.

The protein localises to the secreted. It catalyses the reaction a 1,2-diacyl-sn-glycero-3-phosphocholine + H2O = a 2-acyl-sn-glycero-3-phosphocholine + a fatty acid + H(+). In terms of biological role, catalyzes the hydrolysis of phosphatidylcholine with phospholipase A1 activity. May act as an allergen and induce hemolytic activity. This Vespula maculifrons (Eastern yellow jacket) protein is Phospholipase A1.